The following is a 357-amino-acid chain: Quinolinate synthase (357 aa).

The iminosuccinate site is built by His-50 and Ser-71. Residue Cys-116 coordinates [4Fe-4S] cluster. Iminosuccinate contacts are provided by residues Tyr-142–Asn-144 and Ser-159. Cys-203 provides a ligand contact to [4Fe-4S] cluster. Residues His-229 to Glu-231 and Thr-246 each bind iminosuccinate. Cys-300 lines the [4Fe-4S] cluster pocket.

It belongs to the quinolinate synthase family. Type 1 subfamily. The cofactor is [4Fe-4S] cluster.

It localises to the cytoplasm. The enzyme catalyses iminosuccinate + dihydroxyacetone phosphate = quinolinate + phosphate + 2 H2O + H(+). The protein operates within cofactor biosynthesis; NAD(+) biosynthesis; quinolinate from iminoaspartate: step 1/1. Functionally, catalyzes the condensation of iminoaspartate with dihydroxyacetone phosphate to form quinolinate. This Shewanella sp. (strain ANA-3) protein is Quinolinate synthase.